A 65-amino-acid polypeptide reads, in one-letter code: Small vasohibin-binding protein (65 aa).

Basic and acidic residues predominate over residues 1–22 (MEPACRKDKQKQQTPTRGDRTK). Residues 1-30 (MEPACRKDKQKQQTPTRGDRTKQKTAQQEL) are disordered. A coiled-coil region spans residues 31–51 (KQRQRAEIYALNKVMTELEQQ).

This sequence belongs to the SVBP family.

Its subcellular location is the cytoplasm. The protein resides in the secreted. It is found in the cytoskeleton. Functionally, enhances the tyrosine carboxypeptidase activity of vash1 and vash2, thereby promoting the removal of the C-terminal tyrosine residue of alpha-tubulin. Also required to enhance the solubility and secretion of vash1 and vash2. May play a role in axon and excitatory synapse formation. In Danio rerio (Zebrafish), this protein is Small vasohibin-binding protein.